The chain runs to 545 residues: Luciferin 4-monooxygenase (545 aa).

The short motif at Ser-543 to Leu-545 is the Microbody targeting signal element.

Belongs to the ATP-dependent AMP-binding enzyme family. Requires Mg(2+) as cofactor.

It localises to the peroxisome. The catalysed reaction is firefly D-luciferin + ATP + O2 = firefly oxyluciferin + hnu + AMP + CO2 + diphosphate. Its function is as follows. Produces green light with a wavelength of 562 nm. The sequence is that of Luciferin 4-monooxygenase from Photuris pensylvanica (Pennsylania firefly).